The sequence spans 470 residues: Dendritic cell-specific transmembrane protein (470 aa).

At Met1 to Leu33 the chain is on the cytoplasmic side. The chain crosses the membrane as a helical span at residues Gly34–Ile54. Position 55 (Leu55) is a topological domain, extracellular. A helical membrane pass occupies residues Pro56 to Lys76. Residues Arg77 to Ala97 lie on the Cytoplasmic side of the membrane. The helical transmembrane segment at Leu98 to Phe118 threads the bilayer. Residues Arg119–Ser209 lie on the Extracellular side of the membrane. Residues Val210–Phe230 traverse the membrane as a helical segment. Residues Leu231–Thr292 are Cytoplasmic-facing. A helical membrane pass occupies residues Leu293–Val313. Residues Asp314–Thr376 lie on the Extracellular side of the membrane. Residues Trp377–Leu397 traverse the membrane as a helical segment. The Cytoplasmic portion of the chain corresponds to Met398–Leu470.

In terms of assembly, interacts with CREB3. Monomer. Homodimer. Isoform 1 interacts (via the C-terminus cytoplasmic tail) with OS9 isoform 1 (via the C-terminus tail); the interaction induces DCSTAMP redistribution to the endoplasmic reticulum-Golgi intermediate compartment. Isoform 1 interacts (via the C-terminus cytoplasmic tail) with OS9 isoform 2 (via the C-terminus tail). Glycosylated. In terms of tissue distribution, expressed in macrophages and bone marrow dendritic cells (BM-DC). Weakly expressed in the spleen and lymph node. Highly expressed in multi-nuclear osteoclasts compared to mono-nuclear macrophages. Expressed in foreign body giant cells (FBGCs). Isoform 1 and isoform 2 are expressed in osteoclasts.

It is found in the cell membrane. It localises to the endoplasmic reticulum membrane. The protein localises to the endoplasmic reticulum-Golgi intermediate compartment membrane. Its subcellular location is the endosome. Functionally, probable cell surface receptor that plays several roles in cellular fusion, cell differentiation, bone and immune homeostasis. Plays a role in TNFSF11-mediated osteoclastogenesis. Cooperates with OCSTAMP in modulating cell-cell fusion in both osteoclasts and foreign body giant cells (FBGCs). Participates in osteoclast bone resorption. Involved in inducing the expression of tartrate-resistant acid phosphatase in osteoclast precursors. Plays a role in haematopoietic stem cell differentiation of bone marrow cells toward the myeloid lineage. Inhibits the development of neutrophilic granulocytes. Plays also a role in the regulation of dendritic cell (DC) antigen presentation activity by controlling phagocytic activity. Involved in the maintenance of immune self-tolerance and avoidance of autoimmune reactions. This Mus musculus (Mouse) protein is Dendritic cell-specific transmembrane protein (Dcstamp).